A 648-amino-acid polypeptide reads, in one-letter code: Macrolide export ATP-binding/permease protein MacB (648 aa).

Residues 5–243 (LELCNVSRSY…QGVDAAVVNT (239 aa)) enclose the ABC transporter domain. 41 to 48 (GVSGSGKS) is a binding site for ATP. The next 5 helical transmembrane spans lie at 273–293 (LLTMLGIIIGIASVVSIVVVG), 417–437 (ANVVGEVVLAGNMPVIVIGVA), 523–543 (LFLTLVAVISLVVGGIGVMNI), 577–597 (VLVCLVGGALGISLSMFIAFM), and 611–631 (LTALASAFLCSTFTGILFGWL).

Belongs to the ABC transporter superfamily. Macrolide exporter (TC 3.A.1.122) family. Homodimer. Part of the tripartite efflux system MacAB-TolC, which is composed of an inner membrane transporter, MacB, a periplasmic membrane fusion protein, MacA, and an outer membrane component, TolC. The complex forms a large protein conduit and can translocate molecules across both the inner and outer membranes. Interacts with MacA.

It localises to the cell inner membrane. In terms of biological role, part of the tripartite efflux system MacAB-TolC. MacB is a non-canonical ABC transporter that contains transmembrane domains (TMD), which form a pore in the inner membrane, and an ATP-binding domain (NBD), which is responsible for energy generation. Confers resistance against macrolides. The chain is Macrolide export ATP-binding/permease protein MacB from Salmonella typhimurium (strain LT2 / SGSC1412 / ATCC 700720).